A 558-amino-acid chain; its full sequence is 2-isopropylmalate synthase (558 aa).

The Pyruvate carboxyltransferase domain occupies P31–R305. Residues D40, H244, H246, and N280 each coordinate Mg(2+). The regulatory domain stretch occupies residues N439–A558.

Belongs to the alpha-IPM synthase/homocitrate synthase family. LeuA type 2 subfamily. In terms of assembly, homodimer. Requires Mg(2+) as cofactor.

The protein resides in the cytoplasm. The enzyme catalyses 3-methyl-2-oxobutanoate + acetyl-CoA + H2O = (2S)-2-isopropylmalate + CoA + H(+). It functions in the pathway amino-acid biosynthesis; L-leucine biosynthesis; L-leucine from 3-methyl-2-oxobutanoate: step 1/4. Its function is as follows. Catalyzes the condensation of the acetyl group of acetyl-CoA with 3-methyl-2-oxobutanoate (2-ketoisovalerate) to form 3-carboxy-3-hydroxy-4-methylpentanoate (2-isopropylmalate). This Marinomonas sp. (strain MWYL1) protein is 2-isopropylmalate synthase.